The chain runs to 185 residues: UPF0301 protein HDEF_0602 (185 aa).

Belongs to the UPF0301 (AlgH) family.

This is UPF0301 protein HDEF_0602 from Hamiltonella defensa subsp. Acyrthosiphon pisum (strain 5AT).